Reading from the N-terminus, the 319-residue chain is uncharacterized protein (319 aa).

The first 27 residues, 1-27 (MYKKFVPFAVFLFLFFVSFEMMENPHA), serve as a signal peptide directing secretion. A NodB homology domain is found at 130 to 306 (PMVAFLINVA…QIKDKGYALG (177 aa)).

The protein belongs to the polysaccharide deacetylase family.

This is an uncharacterized protein from Bacillus subtilis (strain 168).